The following is a 237-amino-acid chain: Ribonuclease 3 (237 aa).

In terms of domain architecture, RNase III spans 4–133; the sequence is LTELENSLGV…VLAAIYIDKG (130 aa). Glu46 provides a ligand contact to Mg(2+). Catalysis depends on residues Asp50 and Glu122. Glu122 lines the Mg(2+) pocket. The DRBM domain occupies 160 to 229; that stretch reads DYKSRLQELI…AKVALQQFEN (70 aa).

It belongs to the ribonuclease III family. Homodimer. Mg(2+) is required as a cofactor.

The protein localises to the cytoplasm. The catalysed reaction is Endonucleolytic cleavage to 5'-phosphomonoester.. Its function is as follows. Digests double-stranded RNA. Involved in the processing of primary rRNA transcript to yield the immediate precursors to the large and small rRNAs (23S and 16S). Processes some mRNAs, and tRNAs when they are encoded in the rRNA operon. Processes pre-crRNA and tracrRNA of type II CRISPR loci if present in the organism. This chain is Ribonuclease 3, found in Dehalococcoides mccartyi (strain CBDB1).